Here is a 215-residue protein sequence, read N- to C-terminus: Cytidylate kinase (215 aa).

Position 10–18 (10–18 (GPAASGKGT)) interacts with ATP.

This sequence belongs to the cytidylate kinase family. Type 1 subfamily.

The protein resides in the cytoplasm. The catalysed reaction is CMP + ATP = CDP + ADP. It carries out the reaction dCMP + ATP = dCDP + ADP. This chain is Cytidylate kinase, found in Bartonella henselae (strain ATCC 49882 / DSM 28221 / CCUG 30454 / Houston 1) (Rochalimaea henselae).